Consider the following 261-residue polypeptide: Imidazole glycerol phosphate synthase subunit HisF (261 aa).

Residues aspartate 16 and aspartate 135 contribute to the active site.

It belongs to the HisA/HisF family. Heterodimer of HisH and HisF.

The protein localises to the cytoplasm. It catalyses the reaction 5-[(5-phospho-1-deoxy-D-ribulos-1-ylimino)methylamino]-1-(5-phospho-beta-D-ribosyl)imidazole-4-carboxamide + L-glutamine = D-erythro-1-(imidazol-4-yl)glycerol 3-phosphate + 5-amino-1-(5-phospho-beta-D-ribosyl)imidazole-4-carboxamide + L-glutamate + H(+). It participates in amino-acid biosynthesis; L-histidine biosynthesis; L-histidine from 5-phospho-alpha-D-ribose 1-diphosphate: step 5/9. Functionally, IGPS catalyzes the conversion of PRFAR and glutamine to IGP, AICAR and glutamate. The HisF subunit catalyzes the cyclization activity that produces IGP and AICAR from PRFAR using the ammonia provided by the HisH subunit. This is Imidazole glycerol phosphate synthase subunit HisF from Mycobacterium marinum (strain ATCC BAA-535 / M).